A 184-amino-acid polypeptide reads, in one-letter code: Thylakoid membrane protein slr0575 (184 aa).

Helical transmembrane passes span 5 to 25 (ISLA…GFVA) and 31 to 51 (ATLN…GLAL).

The protein resides in the cellular thylakoid membrane. This is Thylakoid membrane protein slr0575 from Synechocystis sp. (strain ATCC 27184 / PCC 6803 / Kazusa).